We begin with the raw amino-acid sequence, 386 residues long: DNA-directed RNA polymerase subunit Rpo1C (386 aa).

Belongs to the RNA polymerase beta' chain family. As to quaternary structure, part of the RNA polymerase complex.

The protein resides in the cytoplasm. The enzyme catalyses RNA(n) + a ribonucleoside 5'-triphosphate = RNA(n+1) + diphosphate. Its function is as follows. DNA-dependent RNA polymerase (RNAP) catalyzes the transcription of DNA into RNA using the four ribonucleoside triphosphates as substrates. Forms part of the jaw domain. In Methanococcus maripaludis (strain C5 / ATCC BAA-1333), this protein is DNA-directed RNA polymerase subunit Rpo1C.